Consider the following 786-residue polypeptide: Zinc finger transcription factor YRM1 (786 aa).

The interval 1-25 is disordered; sequence MSKRGSLQDRASPSEETVKKAQKRR. Positions 31–59 form a DNA-binding region, zn(2)-C6 fungal-type; that stretch reads CAFCRKRKLRCDQQKPMCSTCKTRGRSGC. Positions 721–747 are disordered; that stretch reads PLAGNSPGLPPEEVRNNSENASHNNET. Polar residues predominate over residues 737 to 747; the sequence is NSENASHNNET.

The protein localises to the cytoplasm. It localises to the nucleus. Transcription factor involved in the regulation of multidrug resistance genes. Acts in concert with YRR1. In Saccharomyces cerevisiae (strain ATCC 204508 / S288c) (Baker's yeast), this protein is Zinc finger transcription factor YRM1 (YRM1).